The following is a 628-amino-acid chain: Nuclear RNA export factor 1 (628 aa).

Residues 47–83 (DTQSRYEDDDEPAVPVRASLTSASSRGRGGSSRGFGQ) are disordered. The span at 63–72 (RASLTSASSR) shows a compositional bias: low complexity. Residues 100-179 (YKCRATGAAK…EFYTSKVPAP (80 aa)) enclose the RRM domain. LRR repeat units lie at residues 245-270 (NIVA…SIAK) and 271-294 (FVME…FAGL). The NTF2 domain occupies 365–526 (LVEQFVTSYF…VAVISDQLFI (162 aa)). One can recognise a TAP-C domain in the interval 576 to 628 (PIREEMIKAMCQFSGMIPPFSEKCLADCAWNFDFACQKFNEIKSSVPAEAFAH).

Belongs to the NXF family. As to quaternary structure, interacts with nucleoporins, Nup98, Nup153 and Nup214.

The protein resides in the nucleus. Functionally, involved in RNA export from the nucleus to the cytoplasm. The protein is Nuclear RNA export factor 1 (nxf-1) of Caenorhabditis elegans.